The sequence spans 364 residues: Ferrochelatase (364 aa).

His-211 and Glu-292 together coordinate Fe cation.

The protein belongs to the ferrochelatase family.

Its subcellular location is the cytoplasm. The catalysed reaction is heme b + 2 H(+) = protoporphyrin IX + Fe(2+). The protein operates within porphyrin-containing compound metabolism; protoheme biosynthesis; protoheme from protoporphyrin-IX: step 1/1. Catalyzes the ferrous insertion into protoporphyrin IX. The protein is Ferrochelatase of Nitrosomonas europaea (strain ATCC 19718 / CIP 103999 / KCTC 2705 / NBRC 14298).